A 501-amino-acid polypeptide reads, in one-letter code: MAINAQEISALIKQQIENFKPNFDVTETGVVTYIGDGIARAHGLENVMSGELLNFENGSYGMAQNLESTDVGIIILGDFTDIREGDTIRRTGKIMEVPVGESLIGRVVDPLGRPVDGLGEIHTDKTRPVEAPAPGVMQRKSVSEPLQTGLKAIDALVPIGRGQRELIIGDRQTGKTTIAIDTILNQKDQDMICIYVAIGQKESTVRTQVETLRQYGALDYTIVVTASASQPSPLLFLAPYTGVAMAEEFMYQGKHVLIVYDDLSKQAVAYRELSLLLRRPPGREAFPGDVFYLHSRLLERSAKVSDELGGGSITALPFIETQAGDISAYIATNVISITDGQIFLGDGLFNAGIRPAIDAGSSVSRVGGSAQIKAMKKVAGTLRIDLASYRELEAFTKFGSDLDAATQAKLNRGRRTVEVLKQPVHKPLPVEKQVTILYALTHGFLDTVPVDDIVRFEEEFHAFFDAQHPEILETIRDTKDLPEEAVLDAAITEFLNQSSFQ.

169-176 (GDRQTGKT) contacts ATP.

Belongs to the ATPase alpha/beta chains family. As to quaternary structure, F-type ATPases have 2 components, CF(1) - the catalytic core - and CF(0) - the membrane proton channel. CF(1) has five subunits: alpha(3), beta(3), gamma(1), delta(1), epsilon(1). CF(0) has three main subunits: a(1), b(2) and c(9-12). The alpha and beta chains form an alternating ring which encloses part of the gamma chain. CF(1) is attached to CF(0) by a central stalk formed by the gamma and epsilon chains, while a peripheral stalk is formed by the delta and b chains.

The protein localises to the cell membrane. The enzyme catalyses ATP + H2O + 4 H(+)(in) = ADP + phosphate + 5 H(+)(out). Its function is as follows. Produces ATP from ADP in the presence of a proton gradient across the membrane. The alpha chain is a regulatory subunit. This Streptococcus pneumoniae (strain 70585) protein is ATP synthase subunit alpha.